A 518-amino-acid chain; its full sequence is Protein FAM98A (518 aa).

2 disordered regions span residues 297–415 and 434–518; these read VLMG…GHSS and GSGY…HYTS. A compositionally biased stretch (basic and acidic residues) spans 302 to 311; it reads VPDRGGRPNE. Gly residues-rich tracts occupy residues 349-364, 383-396, and 405-415; these read GGRG…GGRG, WTDG…GYQD, and QPGGYHGGHSS. Residues 447 to 459 show a composition bias toward basic and acidic residues; that stretch reads RYQDGGHHGDRGG. The span at 460–484 shows a compositional bias: gly residues; the sequence is GRGGRGGRGGRGGRAGQGGGWGGRG. Residues 488 to 504 are compositionally biased toward low complexity; it reads YHQGGQFEQHFQHGGYQ. Polar residues predominate over residues 505–518; the sequence is YNHSGFGQGRHYTS.

It belongs to the FAM98 family. Interacts (via N- and C-terminus) with DDX1. Interacts (via N- and C-terminus) with C14orf166. Interacts with FAM98B. Interacts with PLEKHM1 (via N- and C-terminus). As to expression, expressed strongly in colorectal cancer cells. Expressed strongly in colorectal cancer tissues compared to wild-type colon samples (at protein level). Expressed strongly in colorectal cancer tissues compared to wild-type colon samples.

Functionally, positively stimulates PRMT1-induced protein arginine methylation. Involved in skeletal homeostasis. Positively regulates lysosome peripheral distribution and ruffled border formation in osteoclasts. This is Protein FAM98A from Homo sapiens (Human).